Reading from the N-terminus, the 524-residue chain is MVNSEQALHQHDPAPILQLDKVSKSFGPVNVINQVSIDVRPGRVLALLGENGAGKSTLIKMMSGVYQPDGGQILVDGKPTTLPDTKTAESFGIATIHQELNLVPTMTVAENVMLGRTPRKWGLVNFKHLRRQAQAALDLIGVDVDLNAQVGSLGIARQQMVEIAKALSMNARILILDEPTAALTGREIDQLFKVVDQLKEKGVAMVFISHHLDEIARIGDTVSVLRDGQFIAELPADTDEDELVRLMVGRSIENQYPRSAPEIGQPLLEVKNLNAEGRFTDISLTVRAGEVVGLAGLVGAGRTEVVRSIAGVDKVDSGEVIVAGKKLRGGDISEAIKNGIGHIPEDRKAQGLVLGSSVEDNLGLATLASTARAGLVDRSGQHKRAAEVAEKLRIRMASLKQPISDLSGGNQQKAVFGRWVLAGSNVLLLDEPTRGVDVGAKVEIYNIINEMTEKGGAVLMVSSELPEVLGMADRILVMSGGRIAGELPAKGTTQDDVMALAVSQVDDSITEEAAAEIENTKEDR.

ABC transporter domains lie at 17-252 and 263-505; these read LQLD…GRSI and IGQP…VSQV. 49 to 56 is an ATP binding site; sequence GENGAGKS.

Belongs to the ABC transporter superfamily. Ribose importer (TC 3.A.1.2.1) family. As to quaternary structure, the complex is composed of an ATP-binding protein (RbsA), two transmembrane proteins (RbsC) and a solute-binding protein (RbsB).

It localises to the cell membrane. It carries out the reaction D-ribose(out) + ATP + H2O = D-ribose(in) + ADP + phosphate + H(+). Part of the ABC transporter complex RbsABC involved in ribose import. Responsible for energy coupling to the transport system. This is Ribose import ATP-binding protein RbsA from Corynebacterium glutamicum (strain ATCC 13032 / DSM 20300 / JCM 1318 / BCRC 11384 / CCUG 27702 / LMG 3730 / NBRC 12168 / NCIMB 10025 / NRRL B-2784 / 534).